The chain runs to 216 residues: Pentapeptide repeat protein VPA0095 (216 aa).

Belongs to the pentapeptide repeat protein family.

Functionally, has no effect when overexpressed in E.coli. When Cys-115 is mutated to Tyr and overexpressed it increases (fluoro)quinolone resistance in E.coli up to 16-fold for ciprofloxacin, levofloxacin and nalidixic acid. In Vibrio parahaemolyticus serotype O3:K6 (strain RIMD 2210633), this protein is Pentapeptide repeat protein VPA0095.